Reading from the N-terminus, the 101-residue chain is Putative defensin-like protein 307 (101 aa).

A signal peptide spans 1 to 22; sequence MEKSALIFIGILLFSTCTSIMA. 3 disulfides stabilise this stretch: Cys-29-Cys-49, Cys-35-Cys-54, and Cys-40-Cys-56.

This sequence belongs to the DEFL family.

It localises to the secreted. This Arabidopsis thaliana (Mouse-ear cress) protein is Putative defensin-like protein 307.